We begin with the raw amino-acid sequence, 447 residues long: Ribosomal protein uS12 methylthiotransferase RimO (447 aa).

An MTTase N-terminal domain is found at 6–122; sequence EKVSMVSLGC…IAEIIEEKSS (117 aa). C15, C51, C85, C160, C164, and C167 together coordinate [4Fe-4S] cluster. A Radical SAM core domain is found at 146-376; the sequence is SSPAYTAYLK…MKAQARVSFK (231 aa). The 69-residue stretch at 379–447 folds into the TRAM domain; sequence RRLIDTEEQV…DYDLIGEIIS (69 aa).

Belongs to the methylthiotransferase family. RimO subfamily. [4Fe-4S] cluster is required as a cofactor.

It localises to the cytoplasm. It carries out the reaction L-aspartate(89)-[ribosomal protein uS12]-hydrogen + (sulfur carrier)-SH + AH2 + 2 S-adenosyl-L-methionine = 3-methylsulfanyl-L-aspartate(89)-[ribosomal protein uS12]-hydrogen + (sulfur carrier)-H + 5'-deoxyadenosine + L-methionine + A + S-adenosyl-L-homocysteine + 2 H(+). Functionally, catalyzes the methylthiolation of an aspartic acid residue of ribosomal protein uS12. This Geobacter sulfurreducens (strain ATCC 51573 / DSM 12127 / PCA) protein is Ribosomal protein uS12 methylthiotransferase RimO.